The chain runs to 373 residues: T-protein (373 aa).

The Chorismate mutase domain occupies 1–90; it reads MVAELTALRD…ESYSSENDKG (90 aa). The region spanning 99-361 is the Prephenate/arogenate dehydrogenase domain; that stretch reads RPVVIVGGGG…DYAQRFQSES (263 aa).

This sequence in the C-terminal section; belongs to the prephenate/arogenate dehydrogenase family.

It is found in the cytoplasm. It carries out the reaction chorismate = prephenate. The enzyme catalyses prephenate + NAD(+) = 3-(4-hydroxyphenyl)pyruvate + CO2 + NADH. Its pathway is amino-acid biosynthesis; L-tyrosine biosynthesis; (4-hydroxyphenyl)pyruvate from prephenate (NAD(+) route): step 1/1. It functions in the pathway metabolic intermediate biosynthesis; prephenate biosynthesis; prephenate from chorismate: step 1/1. The polypeptide is T-protein (tyrA) (Escherichia coli (strain K12)).